The chain runs to 668 residues: UvrABC system protein B (668 aa).

The Helicase ATP-binding domain occupies 31–188 (HGIEAGEKAQ…RKLVNIQFER (158 aa)). Residue 44 to 51 (GATGTGKT) participates in ATP binding. Positions 97–120 (YYDYYQPEAYVPSSDTYIEKDSSI) match the Beta-hairpin motif. The Helicase C-terminal domain maps to 435–601 (QMDDLVGEIN…TIIKPIRDLI (167 aa)). The 36-residue stretch at 630 to 665 (EKLIARLEDEMRAAAKKLDFEQAASLRDTIMDMKTE) folds into the UVR domain.

The protein belongs to the UvrB family. Forms a heterotetramer with UvrA during the search for lesions. Interacts with UvrC in an incision complex.

Its subcellular location is the cytoplasm. Functionally, the UvrABC repair system catalyzes the recognition and processing of DNA lesions. A damage recognition complex composed of 2 UvrA and 2 UvrB subunits scans DNA for abnormalities. Upon binding of the UvrA(2)B(2) complex to a putative damaged site, the DNA wraps around one UvrB monomer. DNA wrap is dependent on ATP binding by UvrB and probably causes local melting of the DNA helix, facilitating insertion of UvrB beta-hairpin between the DNA strands. Then UvrB probes one DNA strand for the presence of a lesion. If a lesion is found the UvrA subunits dissociate and the UvrB-DNA preincision complex is formed. This complex is subsequently bound by UvrC and the second UvrB is released. If no lesion is found, the DNA wraps around the other UvrB subunit that will check the other stand for damage. This is UvrABC system protein B from Levilactobacillus brevis (strain ATCC 367 / BCRC 12310 / CIP 105137 / JCM 1170 / LMG 11437 / NCIMB 947 / NCTC 947) (Lactobacillus brevis).